The sequence spans 247 residues: Translation initiation factor IF-3 (247 aa).

Disordered stretches follow at residues 1–20 (MIREQRSSRGGSRDQRTNRR) and 188–247 (LVRQ…PTAS). The interval 182–247 (AQKARELVRQ…AAEAQSPTAS (66 aa)) is needed for vegetative and developmental functions, but not for viability. Positions 207–217 (AGKSAAGASSG) are enriched in low complexity. Residues 218 to 232 (AEEKAEETAEEKKEA) show a composition bias toward basic and acidic residues. Over residues 233 to 247 (QAAPAAAEAQSPTAS) the composition is skewed to low complexity.

It belongs to the IF-3 family. Monomer.

It is found in the cytoplasm. Functionally, IF-3 binds to the 30S ribosomal subunit and shifts the equilibrium between 70S ribosomes and their 50S and 30S subunits in favor of the free subunits, thus enhancing the availability of 30S subunits on which protein synthesis initiation begins. The chain is Translation initiation factor IF-3 from Myxococcus xanthus.